The sequence spans 355 residues: Probable tRNA-dihydrouridine synthase 1 (355 aa).

FMN-binding positions include 48–50 (PLS) and Q102. C132 functions as the Proton donor in the catalytic mechanism. FMN is bound by residues K171, 232-234 (NGD), and 256-257 (SR).

It belongs to the Dus family. It depends on FMN as a cofactor.

It catalyses the reaction a 5,6-dihydrouridine in tRNA + NAD(+) = a uridine in tRNA + NADH + H(+). It carries out the reaction a 5,6-dihydrouridine in tRNA + NADP(+) = a uridine in tRNA + NADPH + H(+). In terms of biological role, catalyzes the synthesis of 5,6-dihydrouridine (D), a modified base found in the D-loop of most tRNAs, via the reduction of the C5-C6 double bond in target uridines. The protein is Probable tRNA-dihydrouridine synthase 1 (dus1) of Synechocystis sp. (strain ATCC 27184 / PCC 6803 / Kazusa).